Here is a 779-residue protein sequence, read N- to C-terminus: Mesenchyme-specific cell surface glycoprotein (779 aa).

The signal sequence occupies residues 1-15; that stretch reads MQFGVPLLVLCLALG. 2 N-linked (GlcNAc...) asparagine glycosylation sites follow: Asn-203 and Asn-234. Residues 249 to 363 are disordered; the sequence is AGFPRGTTWS…QYPMIPTTPL (115 aa). Over residues 262 to 351 the composition is skewed to gly residues; that stretch reads GAGGQGGQGQ…GGQGGQGGGN (90 aa). N-linked (GlcNAc...) asparagine glycosylation is found at Asn-369, Asn-451, and Asn-609.

In terms of tissue distribution, restricted to the primary mesenchyme cell lineage.

It localises to the cell membrane. Not known. Could be involved in mesenchyme cell migration, adhesion, fusion, or spicule formation. This is Mesenchyme-specific cell surface glycoprotein from Strongylocentrotus purpuratus (Purple sea urchin).